Here is a 176-residue protein sequence, read N- to C-terminus: RNA pyrophosphohydrolase (176 aa).

The Nudix hydrolase domain occupies 6 to 149; that stretch reads GYRPNVGIVI…KRDVYRRVMK (144 aa). The Nudix box motif lies at 38–59; sequence GGINPGESAEQAMYRELFEEVG.

This sequence belongs to the Nudix hydrolase family. RppH subfamily. A divalent metal cation serves as cofactor.

Accelerates the degradation of transcripts by removing pyrophosphate from the 5'-end of triphosphorylated RNA, leading to a more labile monophosphorylated state that can stimulate subsequent ribonuclease cleavage. The protein is RNA pyrophosphohydrolase of Shigella boydii serotype 18 (strain CDC 3083-94 / BS512).